The following is a 306-amino-acid chain: UDP-3-O-acyl-N-acetylglucosamine deacetylase (306 aa).

Residues histidine 79, histidine 238, and aspartate 242 each contribute to the Zn(2+) site. The active-site Proton donor is the histidine 265.

Belongs to the LpxC family. Requires Zn(2+) as cofactor.

It catalyses the reaction a UDP-3-O-[(3R)-3-hydroxyacyl]-N-acetyl-alpha-D-glucosamine + H2O = a UDP-3-O-[(3R)-3-hydroxyacyl]-alpha-D-glucosamine + acetate. It participates in glycolipid biosynthesis; lipid IV(A) biosynthesis; lipid IV(A) from (3R)-3-hydroxytetradecanoyl-[acyl-carrier-protein] and UDP-N-acetyl-alpha-D-glucosamine: step 2/6. Functionally, catalyzes the hydrolysis of UDP-3-O-myristoyl-N-acetylglucosamine to form UDP-3-O-myristoylglucosamine and acetate, the committed step in lipid A biosynthesis. This chain is UDP-3-O-acyl-N-acetylglucosamine deacetylase, found in Shewanella oneidensis (strain ATCC 700550 / JCM 31522 / CIP 106686 / LMG 19005 / NCIMB 14063 / MR-1).